The sequence spans 523 residues: Glycerate kinase (523 aa).

At Ser60 the chain carries Phosphoserine. Position 200 is an N6-acetyllysine (Lys200).

It belongs to the glycerate kinase type-2 family.

Its subcellular location is the cytoplasm. The catalysed reaction is (R)-glycerate + ATP = (2R)-3-phosphoglycerate + ADP + H(+). This chain is Glycerate kinase (Glyctk), found in Rattus norvegicus (Rat).